Consider the following 240-residue polypeptide: Pyridoxine 5'-phosphate synthase (240 aa).

Asn-6 is a 3-amino-2-oxopropyl phosphate binding site. 8-9 contacts 1-deoxy-D-xylulose 5-phosphate; the sequence is DH. 3-amino-2-oxopropyl phosphate is bound at residue Arg-17. Catalysis depends on His-42, which acts as the Proton acceptor. Residues Arg-44 and His-49 each coordinate 1-deoxy-D-xylulose 5-phosphate. Glu-69 functions as the Proton acceptor in the catalytic mechanism. Position 99 (Thr-99) interacts with 1-deoxy-D-xylulose 5-phosphate. The active-site Proton donor is His-190. 3-amino-2-oxopropyl phosphate-binding positions include Gly-191 and 212 to 213; that span reads GH.

Belongs to the PNP synthase family. In terms of assembly, homooctamer; tetramer of dimers.

The protein localises to the cytoplasm. The enzyme catalyses 3-amino-2-oxopropyl phosphate + 1-deoxy-D-xylulose 5-phosphate = pyridoxine 5'-phosphate + phosphate + 2 H2O + H(+). Its pathway is cofactor biosynthesis; pyridoxine 5'-phosphate biosynthesis; pyridoxine 5'-phosphate from D-erythrose 4-phosphate: step 5/5. Its function is as follows. Catalyzes the complicated ring closure reaction between the two acyclic compounds 1-deoxy-D-xylulose-5-phosphate (DXP) and 3-amino-2-oxopropyl phosphate (1-amino-acetone-3-phosphate or AAP) to form pyridoxine 5'-phosphate (PNP) and inorganic phosphate. This is Pyridoxine 5'-phosphate synthase from Pseudomonas entomophila (strain L48).